A 207-amino-acid chain; its full sequence is Small ribosomal subunit protein uS5 (207 aa).

Residues 1 to 51 (MTDTPTKQEITSKNDKVPGAIPGEQKKNNRNNDRKRNRRGDSKNLERDSDW) are disordered. The span at 24-51 (EQKKNNRNNDRKRNRRGDSKNLERDSDW) shows a compositional bias: basic and acidic residues. Positions 51–114 (WQERVVQIRR…SDGKKNLVRV (64 aa)) constitute an S5 DRBM domain.

This sequence belongs to the universal ribosomal protein uS5 family. As to quaternary structure, part of the 30S ribosomal subunit. Contacts proteins S4 and S8.

In terms of biological role, with S4 and S12 plays an important role in translational accuracy. Its function is as follows. Located at the back of the 30S subunit body where it stabilizes the conformation of the head with respect to the body. This chain is Small ribosomal subunit protein uS5, found in Prochlorococcus marinus (strain MIT 9312).